We begin with the raw amino-acid sequence, 390 residues long: Phosphopentomutase (390 aa).

Positions 11, 283, 288, 324, 325, and 336 each coordinate Mn(2+).

This sequence belongs to the phosphopentomutase family. Mn(2+) is required as a cofactor.

It localises to the cytoplasm. The enzyme catalyses 2-deoxy-alpha-D-ribose 1-phosphate = 2-deoxy-D-ribose 5-phosphate. It carries out the reaction alpha-D-ribose 1-phosphate = D-ribose 5-phosphate. It participates in carbohydrate degradation; 2-deoxy-D-ribose 1-phosphate degradation; D-glyceraldehyde 3-phosphate and acetaldehyde from 2-deoxy-alpha-D-ribose 1-phosphate: step 1/2. Its function is as follows. Isomerase that catalyzes the conversion of deoxy-ribose 1-phosphate (dRib-1-P) and ribose 1-phosphate (Rib-1-P) to deoxy-ribose 5-phosphate (dRib-5-P) and ribose 5-phosphate (Rib-5-P), respectively. The sequence is that of Phosphopentomutase from Clostridium novyi (strain NT).